Reading from the N-terminus, the 25-residue chain is Histone H4 (25 aa).

A compositionally biased stretch (gly residues) spans 1-14 (MSGRGKGGKGLGKG). Positions 1–25 (MSGRGKGGKGLGKGGAKRHRKVLRD) are disordered. At serine 2 the chain carries N-acetylserine. N6-acetyllysine is present on residues lysine 6, lysine 9, lysine 13, lysine 17, and lysine 21. Basic residues predominate over residues 15–25 (GAKRHRKVLRD). Residues 17 to 21 (KRHRK) mediate DNA binding.

It belongs to the histone H4 family. As to quaternary structure, the nucleosome is a histone octamer containing two molecules each of H2A, H2B, H3 and H4 assembled in one H3-H4 heterotetramer and two H2A-H2B heterodimers. The octamer wraps approximately 147 bp of DNA.

It is found in the nucleus. The protein localises to the chromosome. Its function is as follows. Core component of nucleosome. Nucleosomes wrap and compact DNA into chromatin, limiting DNA accessibility to the cellular machineries which require DNA as a template. Histones thereby play a central role in transcription regulation, DNA repair, DNA replication and chromosomal stability. DNA accessibility is regulated via a complex set of post-translational modifications of histones, also called histone code, and nucleosome remodeling. This is Histone H4 from Medicago sativa (Alfalfa).